A 739-amino-acid chain; its full sequence is Vascular cell adhesion protein 1 (739 aa).

An N-terminal signal peptide occupies residues 1–24 (MPGKMVVILGASNILWIMFAASQA). Ig-like C2-type domains lie at 25–105 (FKIE…RKLE), 109–212 (QVEI…TVRQ), 223–309 (PKNT…LIVQ), 312–399 (PFTV…IQVE), 408–506 (EIEM…QTLY), 511–595 (PRDT…VELI), and 600–684 (PKDI…LTLD). The Extracellular portion of the chain corresponds to 25–698 (FKIETTPESR…ENNKDYFSPE (674 aa)). 5 cysteine pairs are disulfide-bonded: Cys47–Cys95, Cys52–Cys99, Cys137–Cys195, Cys246–Cys291, and Cys335–Cys383. N-linked (GlcNAc...) asparagine glycans are attached at residues Asn273, Asn365, Asn417, Asn463, Asn531, and Asn561. A disulfide bond links Cys534 and Cys579. A helical membrane pass occupies residues 699–720 (LLVLYFASSLIIPAIGMIIYFA). The Cytoplasmic portion of the chain corresponds to 721–739 (RKANMKGSYSLVEAQKSKV).

Cleaved by the metalloproteinase ADAM17 to generate the soluble form. In terms of processing, sialoglycoprotein. Post-translationally, ubiquitinated by TRIM65 via 'Lys-48'-linked ubiquitination; leading to proteasomal degradation. In terms of tissue distribution, expressed on inflamed vascular endothelium, as well as on macrophage-like and dendritic cell types in both normal and inflamed tissue.

The protein resides in the cell membrane. Its subcellular location is the secreted. Functionally, cell adhesion glycoprotein predominantly expressed on the surface of endothelial cells that plays an important role in immune surveillance and inflammation. Acts as a major regulator of leukocyte adhesion to the endothelium through interaction with different types of integrins. During inflammatory responses, binds ligands on the surface of activated endothelial cells to initiate the activation of calcium channels and the plasma membrane-associated small GTPase RAC1 leading to leukocyte transendothelial migration. Also serves as a quality-control checkpoint for entry into bone marrow by providing a 'don't-eat-me' stamping in the context of major histocompatibility complex (MHC) class-I presentation. The sequence is that of Vascular cell adhesion protein 1 (VCAM1) from Homo sapiens (Human).